Here is a 98-residue protein sequence, read N- to C-terminus: La1-like protein 13 (98 aa).

The first 24 residues, 1–24 (MERILKPVFLAILIVLSFSSQCMG), serve as a signal peptide directing secretion. K97 bears the Lysine amide mark.

It belongs to the scorpion La1-like peptide family. Contains 4 disulfide bonds. In terms of tissue distribution, expressed by the venom gland.

It is found in the secreted. The chain is La1-like protein 13 from Urodacus yaschenkoi (Inland robust scorpion).